The primary structure comprises 300 residues: ETS homologous factor (300 aa).

In terms of domain architecture, PNT spans 29 to 115; the sequence is STCNVSSGFF…SNLQHLKWNG (87 aa). Residues 183–202 form a disordered region; the sequence is ESPDMKKEQDPPAKCHTKKH. Basic and acidic residues predominate over residues 185-195; it reads PDMKKEQDPPA. Residues 207-289 constitute a DNA-binding region (ETS); it reads THLWEFIRDI…DGRRLVYKFG (83 aa).

The protein belongs to the ETS family. Expressed exclusively in tissues with a high content of epithelial cells. Highly expressed in salivary gland, mammary gland, prostate, and lung. Weakly expressed in kidney and colon. Not detected in heart, brain, placenta, liver, skeletal muscle, spleen, thymus, testis, ovary, small intestine or peripheral blood leukocytes.

It is found in the nucleus. Transcriptional activator that may play a role in regulating epithelial cell differentiation and proliferation. May act as a repressor for a specific subset of ETS/AP-1-responsive genes and as a modulator of the nuclear response to mitogen-activated protein kinase signaling cascades. Binds to DNA sequences containing the consensus nucleotide core sequence GGAA. Involved in regulation of TNFRSF10B/DR5 expression through Ets-binding sequences on the TNFRSF10B/DR5 promoter. May contribute to development and carcinogenesis by acting as a tumor suppressor gene or anti-oncogene. In Homo sapiens (Human), this protein is ETS homologous factor.